Reading from the N-terminus, the 225-residue chain is Platelet-activating factor acetylhydrolase IB subunit beta homolog (225 aa).

It belongs to the 'GDSL' lipolytic enzyme family. Platelet-activating factor acetylhydrolase IB beta/gamma subunits subfamily. As to quaternary structure, does not interact with Lis-1.

This chain is Platelet-activating factor acetylhydrolase IB subunit beta homolog (Paf-AHalpha), found in Drosophila melanogaster (Fruit fly).